Consider the following 120-residue polypeptide: ATP-dependent Clp protease adapter protein ClpS (120 aa).

The protein belongs to the ClpS family. Binds to the N-terminal domain of the chaperone ClpA.

In terms of biological role, involved in the modulation of the specificity of the ClpAP-mediated ATP-dependent protein degradation. The protein is ATP-dependent Clp protease adapter protein ClpS of Pseudomonas fluorescens (strain ATCC BAA-477 / NRRL B-23932 / Pf-5).